The primary structure comprises 337 residues: uncharacterized protein (337 aa).

The span at 1–11 (MSEIEEEEEEG) shows a compositional bias: acidic residues. Residues 1–20 (MSEIEEEEEEGSASAITGSR) form a disordered region. An N-acetylserine modification is found at Ser2. A coiled-coil region spans residues 50 to 130 (ALSTRVSALE…LQRDVSKLEG (81 aa)). The interval 139-242 (LQDDDQNAGT…PISPRRHSVS (104 aa)) is disordered. Residues 170-182 (SSIQSQQASEAIE) show a composition bias toward low complexity. The segment covering 197–211 (LSASLPLVSQTTTPR) has biased composition (polar residues). Thr213 carries the phosphothreonine modification. Ser217 carries the post-translational modification Phosphoserine. Over residues 223-233 (ASGTPKTTSRP) the composition is skewed to polar residues. A Phosphothreonine modification is found at Thr226. Ser235 is subject to Phosphoserine.

This is an uncharacterized protein from Arabidopsis thaliana (Mouse-ear cress).